Consider the following 118-residue polypeptide: Large ribosomal subunit protein bL17 (118 aa).

The protein belongs to the bacterial ribosomal protein bL17 family. As to quaternary structure, part of the 50S ribosomal subunit. Contacts protein L32.

In Campylobacter concisus (strain 13826), this protein is Large ribosomal subunit protein bL17.